The sequence spans 186 residues: Ribosome-recycling factor (186 aa).

The tract at residues 140-163 (LKKAEKDGDIGQDEGRSLSERVQK) is disordered.

Belongs to the RRF family.

It is found in the cytoplasm. Responsible for the release of ribosomes from messenger RNA at the termination of protein biosynthesis. May increase the efficiency of translation by recycling ribosomes from one round of translation to another. The protein is Ribosome-recycling factor of Rhizobium rhizogenes (strain K84 / ATCC BAA-868) (Agrobacterium radiobacter).